Reading from the N-terminus, the 101-residue chain is Replication restart protein PriB (101 aa).

Positions 1-101 (MTTNSLVLSG…IHAENVELKT (101 aa)) constitute an SSB domain.

Belongs to the PriB family. Homodimer. Interacts with PriA and DnaT. Component of the replication restart primosome. Primosome assembly occurs via a 'hand-off' mechanism. PriA binds to replication forks, subsequently PriB then DnaT bind; DnaT then displaces ssDNA to generate the helicase loading substrate.

In terms of biological role, involved in the restart of stalled replication forks, which reloads the replicative helicase on sites other than the origin of replication; the PriA-PriB pathway is the major replication restart pathway. During primosome assembly it facilitates complex formation between PriA and DnaT on DNA; stabilizes PriA on DNA. Stimulates the DNA unwinding activity of PriA helicase. This chain is Replication restart protein PriB, found in Shewanella putrefaciens (strain CN-32 / ATCC BAA-453).